A 312-amino-acid chain; its full sequence is Homoserine kinase (312 aa).

94 to 104 (PLGRGLGSSAA) contacts ATP.

Belongs to the GHMP kinase family. Homoserine kinase subfamily.

It localises to the cytoplasm. It catalyses the reaction L-homoserine + ATP = O-phospho-L-homoserine + ADP + H(+). The protein operates within amino-acid biosynthesis; L-threonine biosynthesis; L-threonine from L-aspartate: step 4/5. Catalyzes the ATP-dependent phosphorylation of L-homoserine to L-homoserine phosphate. The polypeptide is Homoserine kinase (Caldanaerobacter subterraneus subsp. tengcongensis (strain DSM 15242 / JCM 11007 / NBRC 100824 / MB4) (Thermoanaerobacter tengcongensis)).